The sequence spans 201 residues: FMN-dependent NADH:quinone oxidoreductase (201 aa).

Residues serine 10, 16–18 (SQS), 96–99 (MYNF), and 140–143 (SRGG) contribute to the FMN site.

It belongs to the azoreductase type 1 family. As to quaternary structure, homodimer. Requires FMN as cofactor.

The catalysed reaction is 2 a quinone + NADH + H(+) = 2 a 1,4-benzosemiquinone + NAD(+). The enzyme catalyses N,N-dimethyl-1,4-phenylenediamine + anthranilate + 2 NAD(+) = 2-(4-dimethylaminophenyl)diazenylbenzoate + 2 NADH + 2 H(+). Functionally, quinone reductase that provides resistance to thiol-specific stress caused by electrophilic quinones. Also exhibits azoreductase activity. Catalyzes the reductive cleavage of the azo bond in aromatic azo compounds to the corresponding amines. The chain is FMN-dependent NADH:quinone oxidoreductase from Escherichia coli O9:H4 (strain HS).